The chain runs to 449 residues: Tubulin alpha chain (449 aa).

Residues Gln-11, Glu-71, Ser-140, Gly-144, Thr-145, Thr-179, Asn-206, and Asn-228 each contribute to the GTP site. Glu-71 contributes to the Mg(2+) binding site. The active site involves Glu-254.

The protein belongs to the tubulin family. In terms of assembly, dimer of alpha and beta chains. A typical microtubule is a hollow water-filled tube with an outer diameter of 25 nm and an inner diameter of 15 nM. Alpha-beta heterodimers associate head-to-tail to form protofilaments running lengthwise along the microtubule wall with the beta-tubulin subunit facing the microtubule plus end conferring a structural polarity. Microtubules usually have 13 protofilaments but different protofilament numbers can be found in some organisms and specialized cells. Mg(2+) is required as a cofactor.

It is found in the cytoplasm. Its subcellular location is the cytoskeleton. It carries out the reaction GTP + H2O = GDP + phosphate + H(+). In terms of biological role, tubulin is the major constituent of microtubules, a cylinder consisting of laterally associated linear protofilaments composed of alpha- and beta-tubulin heterodimers. Microtubules grow by the addition of GTP-tubulin dimers to the microtubule end, where a stabilizing cap forms. Below the cap, tubulin dimers are in GDP-bound state, owing to GTPase activity of alpha-tubulin. This is Tubulin alpha chain (TUB1) from Pneumocystis carinii.